The sequence spans 505 residues: ATP nucleosidase Cap17 (505 aa).

Positions Met-1–Leu-229 are cyclic oligonucleotide sensing-domain. The interval Leu-239 to Ala-505 is purine nucleoside phosphorylase domain.

The protein belongs to the Cap17 family.

It catalyses the reaction ATP + H2O = D-ribose 5-triphosphate + adenine. The catalysed reaction is dATP + H2O = 2-deoxyribose 5-triphosphate + adenine. Its function is as follows. Effector protein with (d)ATP degrading activity of a CBASS antivirus system. CBASS (cyclic oligonucleotide-based antiphage signaling system) provides immunity against bacteriophage. A CD-NTase protein synthesizes cyclic nucleotides in response to infection; these serve as specific second messenger signals. The signals activate a diverse range of effectors, leading to bacterial cell death and thus abortive phage infection. A type III CBASS system. Expression of this CBASS system (Cap18-Cap6-Cap7-CdnC-CapW-Cap17) in a susceptible E.coli (strain MG1655) confers resistance to bacteriophage P1, leading to cell lysis. By 50 minutes post-infection, ATP levels are markedly reduced while dATP has been eliminated. The C-terminal purine nucleoside phosphorylase (PNP) domain cleaves the N-glycosidic bond of (d)ATP to release adenine and a sugar triphosphate; has no activity on other (d)NTPs, nor on DNA or RNA. In vivo during phage infection has pleoitropic effects on nucleotide accumulation. This protein may be activated by the cognate CD-NTase (CdnC). The chain is ATP nucleosidase Cap17 from Escherichia coli (strain KTE188).